We begin with the raw amino-acid sequence, 424 residues long: Cyclin-dependent kinase D-1 (424 aa).

One can recognise a Protein kinase domain in the interval 19–299 (YLKREVLGEG…AQQALEHRYF (281 aa)). Residues 25 to 33 (LGEGTYGVV) and K48 contribute to the ATP site. A Phosphothreonine modification is found at T29. Position 30 is a phosphotyrosine (Y30). Residue D141 is the Proton acceptor of the active site. S168 carries the phosphoserine modification. Position 174 is a phosphothreonine (T174). 2 disordered regions span residues 303 to 337 (PAPTKPSQLPRPPPKGDSGNNKIPDLNLQDGPVVL) and 359 to 424 (ADRT…GYTE). Over residues 359 to 374 (ADRTEEHPSGARHMDD) the composition is skewed to basic and acidic residues.

It belongs to the protein kinase superfamily. CMGC Ser/Thr protein kinase family. CDC2/CDKX subfamily.

Its subcellular location is the nucleus. The enzyme catalyses L-seryl-[protein] + ATP = O-phospho-L-seryl-[protein] + ADP + H(+). It catalyses the reaction L-threonyl-[protein] + ATP = O-phospho-L-threonyl-[protein] + ADP + H(+). The catalysed reaction is [DNA-directed RNA polymerase] + ATP = phospho-[DNA-directed RNA polymerase] + ADP + H(+). The sequence is that of Cyclin-dependent kinase D-1 (CDKD-1) from Oryza sativa subsp. indica (Rice).